The chain runs to 228 residues: Ankyrin repeat domain-containing protein 46 (228 aa).

4 ANK repeats span residues 11-40 (QTNV…DPNI), 44-74 (RGRT…PLAT), 77-103 (QGNT…KIDI), and 107-138 (QGAT…EVKG). A helical transmembrane segment spans residues 195 to 215 (VLLLILVIALLSLGIAYYVSG).

Its subcellular location is the membrane. This is Ankyrin repeat domain-containing protein 46 (Ankrd46) from Rattus norvegicus (Rat).